The sequence spans 164 residues: Large ribosomal subunit protein bL17 (164 aa).

The tract at residues 127–164 (RARTDSVPARKGAGKKDASRVSGTVPDGQSQKIGKKKE) is disordered.

Belongs to the bacterial ribosomal protein bL17 family. As to quaternary structure, part of the 50S ribosomal subunit. Contacts protein L32.

In Treponema pallidum (strain Nichols), this protein is Large ribosomal subunit protein bL17.